A 400-amino-acid polypeptide reads, in one-letter code: Flavo-diiron protein FprA2 (400 aa).

The segment at 32-216 (GTSYNAYLIK…VVKGLDILDA (185 aa)) is zinc metallo-hydrolase. Fe cation is bound by residues His-79, Glu-81, Asp-83, His-147, Asp-166, and His-226. A Flavodoxin-like domain is found at 257-397 (IPIFYCSAYG…KAFKFGEDFA (141 aa)). FMN contacts are provided by residues 263 to 267 (SAYGN) and 345 to 372 (AFGS…KVFQ).

The protein in the N-terminal section; belongs to the zinc metallo-hydrolase group 3 family. In terms of assembly, homotetramer. Requires FMN as cofactor. Fe cation serves as cofactor.

It carries out the reaction 2 NADH + O2 + 2 H(+) = 2 NAD(+) + 2 H2O. Catalyzes the four-electron reduction of molecular oxygen to water. In fact, functions as the terminal component of an NADH oxidase (NADH:O(2) oxidoreductase) when using NADH:rubredoxin oxidoreductase (NROR) and rubredoxin (Rd) as electron transport intermediaries between NADH and FDP. Is thus able to reductively scavenge intracellular dioxygen and is part of an oxidative stress defense system in C.acetobutylicum, an obligate anaerobic bacterium. Can also serve as the terminal component of an NADH:nitric oxide oxidoreductase (NOR) with a catalytic efficiency comparable to that of its NADH oxidase activity, and therefore might have an in vivo role in scavenging nitric oxide. This chain is Flavo-diiron protein FprA2 (fprA2), found in Clostridium acetobutylicum (strain ATCC 824 / DSM 792 / JCM 1419 / IAM 19013 / LMG 5710 / NBRC 13948 / NRRL B-527 / VKM B-1787 / 2291 / W).